Consider the following 471-residue polypeptide: Cysteine--tRNA ligase (471 aa).

Cysteine 29 is a binding site for Zn(2+). The 'HIGH' region motif lies at 31–41; sequence PTVYNYIHIGN. Cysteine 209, histidine 234, and glutamate 238 together coordinate Zn(2+). Residues 266-270 carry the 'KMSKS' region motif; sequence KMSKS. Residue lysine 269 coordinates ATP.

It belongs to the class-I aminoacyl-tRNA synthetase family. As to quaternary structure, monomer. The cofactor is Zn(2+).

Its subcellular location is the cytoplasm. The catalysed reaction is tRNA(Cys) + L-cysteine + ATP = L-cysteinyl-tRNA(Cys) + AMP + diphosphate. In Listeria monocytogenes serotype 4b (strain CLIP80459), this protein is Cysteine--tRNA ligase.